We begin with the raw amino-acid sequence, 1422 residues long: FH1/FH2 domain-containing protein 3 (1422 aa).

Positions 18-411 constitute a GBD/FH3 domain; that stretch reads NSTNFPEPSR…NFGNNSYHSS (394 aa). Disordered stretches follow at residues 323–464, 521–666, 687–708, 754–781, 821–849, 1262–1305, 1320–1357, and 1374–1410; these read RHED…RRRQ, ACLA…GVNG, RKSPDDEEKGDGEAGRTQQEAE, SGDLGRGSISPDAEPNDKVPETAPVQPK, LGHREAPGPPPPPPPTFLGLPPPPPPPLL, QQKQ…SYAE, SSPSVEDATPALGVRTRSRASRGSTSSWTMGTDDSPNV, and TQVPSQRVVPRERKRSRANRKSLRRTLKSGLTPEEAR. A Phosphoserine modification is found at S345. Over residues 357–366 the composition is skewed to basic residues; it reads LDRRRSRRHS. The segment covering 367 to 390 has biased composition (polar residues); the sequence is VQSIKSTLSAPTSPCSQSAPSFKP. At S375 the chain carries Phosphoserine. Low complexity predominate over residues 410-430; that stretch reads SSRPSSGSSVPTTPTSSVSPP. Residues 438-449 show a composition bias toward polar residues; it reads SSPSGLLTSSFR. A coiled-coil region spans residues 448-480; the sequence is FRQHQESLAAERERRRQEREERLQRIEREERNK. The segment covering 450-464 has biased composition (basic and acidic residues); sequence QHQESLAAERERRRQ. Positions 521–535 are enriched in low complexity; sequence ACLAPLSHSPSSSDS. Polar residues predominate over residues 536–547; that stretch reads QEALTVSASSPG. Acidic residues-rich tracts occupy residues 559–569 and 592–603; these read PEPESEAEPEA and ETEVEQALEQEP. The segment covering 604–624 has biased composition (basic and acidic residues); the sequence is EERASLSEKERQNEGVNERDN. The span at 626–635 shows a compositional bias: low complexity; the sequence is SASSVSSSSS. A compositionally biased stretch (basic and acidic residues) spans 637 to 651; sequence LEREEKEDKLSRDRT. S763 is modified (phosphoserine). At T775 the chain carries Phosphothreonine. The span at 827-849 shows a compositional bias: pro residues; the sequence is PGPPPPPPPTFLGLPPPPPPPLL. The 32-residue stretch at 827–858 folds into the FH1 domain; sequence PGPPPPPPPTFLGLPPPPPPPLLDSIPPPPVP. The region spanning 883-1279 is the FH2 domain; that stretch reads GQPTFTKKKK…HRERNKTRGK (397 aa). The segment covering 1264–1278 has biased composition (basic residues); the sequence is KQKRANHRERNKTRG. The DAD domain occupies 1359 to 1391; that stretch reads DDAADEIMDRIVKSATQVPSQRVVPRERKRSRA. Positions 1385-1400 are enriched in basic residues; the sequence is ERKRSRANRKSLRRTL.

It belongs to the formin homology family. In terms of assembly, interacts with nestin/NES-based interfilament (IF). Interacts with SQSTM1; isoform 4 threonine phosphorylation disrupts SQSTM1-binding. In terms of processing, phosphorylated on Thr-1474 and Thr-1476 by CK2. Expressed in the heart, kidney and brain. May be down-regulated in various types of heart diseases, including idiopathic dilated, ventricular dilated, familial dilated and perinatal dilated cardiomyopathies, as well as ischemic heart disease (at protein level).

Its subcellular location is the cytoplasm. The protein localises to the cytoskeleton. It is found in the myofibril. The protein resides in the sarcomere. It localises to the z line. Functionally, actin-organizing protein that may cause stress fiber formation together with cell elongation. Isoform 4 may play a role in actin filament polymerization in cardiomyocytes. This is FH1/FH2 domain-containing protein 3 (FHOD3) from Homo sapiens (Human).